The sequence spans 217 residues: Histone H1C (217 aa).

2 stretches are compositionally biased toward low complexity: residues 1 to 11 (MAETASTETTP) and 28 to 45 (KKAA…PSAS). 2 disordered regions span residues 1-45 (MAET…PSAS) and 123-217 (VAKK…AAKK). Residues 40 to 113 (SGPSASELIV…GASGSFKLNK (74 aa)) enclose the H15 domain. Composition is skewed to basic residues over residues 123–151 (VAKK…KPKK) and 159–217 (SPKK…AAKK).

This sequence belongs to the histone H1/H5 family.

It is found in the nucleus. Its subcellular location is the chromosome. Histones H1 are necessary for the condensation of nucleosome chains into higher-order structures. This is Histone H1C from Xenopus laevis (African clawed frog).